A 463-amino-acid chain; its full sequence is Cysteine--tRNA ligase (463 aa).

Zn(2+) is bound at residue C29. A 'HIGH' region motif is present at residues 31 to 41 (PTVYDFAHIGN). Zn(2+)-binding residues include C227, H252, and E256. The 'KMSKS' region motif lies at 285-289 (KMSKS). Position 288 (K288) interacts with ATP.

Belongs to the class-I aminoacyl-tRNA synthetase family. Monomer. Zn(2+) serves as cofactor.

It localises to the cytoplasm. The enzyme catalyses tRNA(Cys) + L-cysteine + ATP = L-cysteinyl-tRNA(Cys) + AMP + diphosphate. This chain is Cysteine--tRNA ligase, found in Rhodopseudomonas palustris (strain BisB5).